A 516-amino-acid chain; its full sequence is Extracellular endo-inulinase inu2 (516 aa).

An N-terminal signal peptide occupies residues 1 to 23; the sequence is MLNPKVAYMVWMTCLGLTLPSQA. Substrate is bound by residues 41–43 and N61; that span reads MNE. E43 is a catalytic residue. Residues N108 and N109 are each glycosylated (N-linked (GlcNAc...) asparagine). Residue D176 participates in substrate binding. N210 carries an N-linked (GlcNAc...) asparagine glycan. N320 is a substrate binding site. A glycan (N-linked (GlcNAc...) asparagine) is linked at N372.

Belongs to the glycosyl hydrolase 32 family.

Its subcellular location is the secreted. It carries out the reaction Endohydrolysis of (2-&gt;1)-beta-D-fructosidic linkages in inulin.. Its function is as follows. Endo-inulinase involved in utilization of the plant storage polymer inulin, consisting of fructooligosaccharides with a degree of polymerization (DP) value from 2 to 60. The sequence is that of Extracellular endo-inulinase inu2 (inu2) from Aspergillus ficuum.